The sequence spans 216 residues: Methylthioribulose-1-phosphate dehydratase (216 aa).

Residues H101 and H103 each coordinate Zn(2+).

The protein belongs to the aldolase class II family. MtnB subfamily. The cofactor is Zn(2+).

It catalyses the reaction 5-(methylsulfanyl)-D-ribulose 1-phosphate = 5-methylsulfanyl-2,3-dioxopentyl phosphate + H2O. The protein operates within amino-acid biosynthesis; L-methionine biosynthesis via salvage pathway; L-methionine from S-methyl-5-thio-alpha-D-ribose 1-phosphate: step 2/6. Functionally, catalyzes the dehydration of methylthioribulose-1-phosphate (MTRu-1-P) into 2,3-diketo-5-methylthiopentyl-1-phosphate (DK-MTP-1-P). The chain is Methylthioribulose-1-phosphate dehydratase from Bradyrhizobium sp. (strain BTAi1 / ATCC BAA-1182).